We begin with the raw amino-acid sequence, 357 residues long: Glutamyl endopeptidase (357 aa).

An N-terminal signal peptide occupies residues 1-29; that stretch reads MKGKFLKVSSLFVATLTTATLVSSPAANA. Residues 30-68 constitute a propeptide that is removed on maturation; the sequence is LSSKAMDNHPQQTQTDKQQTPKIQKGGNLKPLEQRERAN. The tract at residues 33-58 is disordered; it reads KAMDNHPQQTQTDKQQTPKIQKGGNL. Residues 40–54 show a composition bias toward low complexity; it reads QQTQTDKQQTPKIQK. Catalysis depends on charge relay system residues histidine 119, aspartate 161, and serine 237. The disordered stretch occupies residues 282-357; that stretch reads NFANDDHPNN…NNNSDNPDAA (76 aa). 18 repeat units span residues 289-291, 292-294, 295-297, 298-300, 301-303, 304-306, 307-309, 310-312, 313-315, 316-318, 319-321, 322-324, 325-327, 328-330, 331-333, 337-339, 340-342, and 343-345. The tract at residues 289–345 is 18 X 3 AA repeats of P-[DN]-N; the sequence is PNNPDNPDNPNNPDNPNNPDNPNNPDNPDNPNNPDNPNNPDNPNNPDQPNNPNNPDN. Positions 291–357 are enriched in low complexity; it reads NPDNPDNPNN…NNNSDNPDAA (67 aa).

Belongs to the peptidase S1B family. Post-translationally, proteolytically cleaved by aureolysin (aur). This cleavage leads to the activation of SspA.

It is found in the secreted. The catalysed reaction is Preferential cleavage: Glu-|-Xaa, Asp-|-Xaa.. In terms of biological role, preferentially cleaves peptide bonds on the carboxyl-terminal side of aspartate and glutamate. Along with other extracellular proteases it is involved in colonization and infection of human tissues. Required for proteolytic maturation of thiol protease SspB and inactivation of SspC, an inhibitor of SspB. It is the most important protease for degradation of fibronectin-binding protein (FnBP) and surface protein A, which are involved in adherence to host cells. May also protect bacteria against host defense mechanism by cleaving the immunoglobulin classes IgG, IgA and IgM. May be involved in the stability of secreted lipases. The protein is Glutamyl endopeptidase (sspA) of Staphylococcus aureus (strain MRSA252).